A 275-amino-acid polypeptide reads, in one-letter code: Formamidopyrimidine-DNA glycosylase (275 aa).

Residue proline 2 is the Schiff-base intermediate with DNA of the active site. The active-site Proton donor is the glutamate 3. Lysine 58 serves as the catalytic Proton donor; for beta-elimination activity. Residues histidine 93, arginine 111, and arginine 156 each contribute to the DNA site. An FPG-type zinc finger spans residues 241–275; sequence FVYDRAGQPCRVCNTPIRQIVQGQRSTYFCPTCQR. Arginine 265 serves as the catalytic Proton donor; for delta-elimination activity.

Belongs to the FPG family. As to quaternary structure, monomer. Requires Zn(2+) as cofactor.

The enzyme catalyses Hydrolysis of DNA containing ring-opened 7-methylguanine residues, releasing 2,6-diamino-4-hydroxy-5-(N-methyl)formamidopyrimidine.. The catalysed reaction is 2'-deoxyribonucleotide-(2'-deoxyribose 5'-phosphate)-2'-deoxyribonucleotide-DNA = a 3'-end 2'-deoxyribonucleotide-(2,3-dehydro-2,3-deoxyribose 5'-phosphate)-DNA + a 5'-end 5'-phospho-2'-deoxyribonucleoside-DNA + H(+). In terms of biological role, involved in base excision repair of DNA damaged by oxidation or by mutagenic agents. Acts as a DNA glycosylase that recognizes and removes damaged bases. Has a preference for oxidized purines, such as 7,8-dihydro-8-oxoguanine (8-oxoG). Has AP (apurinic/apyrimidinic) lyase activity and introduces nicks in the DNA strand. Cleaves the DNA backbone by beta-delta elimination to generate a single-strand break at the site of the removed base with both 3'- and 5'-phosphates. The protein is Formamidopyrimidine-DNA glycosylase of Burkholderia lata (strain ATCC 17760 / DSM 23089 / LMG 22485 / NCIMB 9086 / R18194 / 383).